The following is a 373-amino-acid chain: Ubiquitin domain-containing protein DSK2 (373 aa).

The Ubiquitin-like domain maps to 1 to 76 (MSLNIHIKSG…SVHLVKSQPK (76 aa)). Residues Lys13 and Lys76 each participate in a glycyl lysine isopeptide (Lys-Gly) (interchain with G-Cter in ubiquitin) cross-link. Residues 221–270 (DPNAGMGSAGGAASAFPAPGGDAPEEGSNTNTTSSSNTGNNAGTNAGTNA) form a disordered region. Residues 231–270 (GAASAFPAPGGDAPEEGSNTNTTSSSNTGNNAGTNAGTNA) are compositionally biased toward low complexity. Residues 327 to 371 (PPEERYEHQLRQLNDMGFFDFDRNVAALRRSGGSVQGALDSLLNG) form the UBA domain.

It is found in the nucleus. In terms of biological role, involved, with RAD23 in spindle pole body duplication. Involved in the ubiquitin-proteasome proteolytic pathway. This Saccharomyces cerevisiae (strain ATCC 204508 / S288c) (Baker's yeast) protein is Ubiquitin domain-containing protein DSK2 (DSK2).